The chain runs to 838 residues: V-type proton ATPase 116 kDa subunit a 1 (838 aa).

At Met1–Glu388 the chain is on the cytoplasmic side. A helical transmembrane segment spans residues Ile389–Phe407. Residues Gly408 to Asp409 lie on the Vacuolar side of the membrane. Residues Phe410–Arg426 form a helical membrane-spanning segment. Residues Glu427–Ser441 are Cytoplasmic-facing. Residues Thr442–Ser471 form a helical membrane-spanning segment. Residues Leu472–Ser535 lie on the Vacuolar side of the membrane. Residues Phe536 to Leu555 form a helical membrane-spanning segment. Residues Ser556–Phe573 lie on the Cytoplasmic side of the membrane. Residues Ile574–Lys594 form a helical membrane-spanning segment. Topologically, residues Trp595–Phe639 are vacuolar. A helical transmembrane segment spans residues Leu640 to Leu659. Over Arg660–Thr725 the chain is Cytoplasmic. Residues Ile726–Ala750 form a helical membrane-spanning segment. The Vacuolar segment spans residues Gln751–Ala771. A helical membrane pass occupies residues Gly772–Glu810. The Cytoplasmic segment spans residues Phe811–Asp838.

Belongs to the V-ATPase 116 kDa subunit family. V-ATPase is a heteromultimeric enzyme made up of two complexes: the ATP-hydrolytic V1 complex and the proton translocation V0 complex. The V1 complex consists of three catalytic AB heterodimers that form a heterohexamer, three peripheral stalks each consisting of EG heterodimers, one central rotor including subunits D and F, and the regulatory subunits C and H. The proton translocation complex V0 consists of the proton transport subunit a, a ring of proteolipid subunits c9c'', rotary subunit d, subunits e and f, and two accessory subunits. As to expression, detected in brain (at protein level). Highest expression in brain, intermediate levels in kidney, and relatively low levels in bone and liver.

Its subcellular location is the cytoplasmic vesicle. The protein resides in the clathrin-coated vesicle membrane. It localises to the secretory vesicle. The protein localises to the synaptic vesicle membrane. It is found in the melanosome. Functionally, subunit of the V0 complex of vacuolar(H+)-ATPase (V-ATPase), a multisubunit enzyme composed of a peripheral complex (V1) that hydrolyzes ATP and a membrane integral complex (V0) that translocates protons. V-ATPase is responsible for acidifying and maintaining the pH of intracellular compartments and in some cell types, is targeted to the plasma membrane, where it is responsible for acidifying the extracellular environment. Required for assembly and activity of the vacuolar ATPase. In Gallus gallus (Chicken), this protein is V-type proton ATPase 116 kDa subunit a 1 (ATP6V0A1).